Reading from the N-terminus, the 538-residue chain is Sodium/hydrogen exchanger 1 (538 aa).

The Cytoplasmic portion of the chain corresponds to 1–19; the sequence is MLDSLVSKLPSLSTSDHAS. The helical transmembrane segment at 20-40 threads the bilayer; the sequence is VVALNLFVALLCACIVLGHLL. Residues 41–45 lie on the Vacuolar side of the membrane; that stretch reads EENRW. Residues 46–66 form a helical membrane-spanning segment; it reads MNESITALLIGLGTGVTILLI. At 67–73 the chain is on the cytoplasmic side; that stretch reads SKGKSSH. Positions 74 to 94 form an intramembrane region, helical; sequence LLVFSEDLFFIYLLPPIIFNA. Residues 95–106 lie on the Cytoplasmic side of the membrane; it reads GFQVKKKQFFRN. Residues 107–127 traverse the membrane as a helical segment; it reads FVTIMLFGAVGTIISCTIISL. Over 128–146 the chain is Vacuolar; sequence GVTQFFKKLDIGTFDLGDY. Intramembrane regions (helical) lie at residues 147–166 and 172–192; these read LAIG…QVLN and LLYS…VVVF. The Vacuolar segment spans residues 193-216; that stretch reads NAIQSFDLTHLNHEAAFHLLGNFL. A helical transmembrane segment spans residues 217–237; it reads YLFLLSTLLGAATGLISAYVI. Topologically, residues 238-262 are cytoplasmic; the sequence is KKLYFGRHSTDREVALMMLMAYLSY. A helical transmembrane segment spans residues 263-283; sequence MLAELFDLSGILTVFFCGIVM. The Vacuolar portion of the chain corresponds to 284–302; the sequence is SHYTWHNVTESSRITTKHT. Asparagine 290 is a glycosylation site (N-linked (GlcNAc...) asparagine). The chain crosses the membrane as a helical span at residues 303 to 323; the sequence is FATLSFLAETFIFLYVGMDAL. Residues 324-342 are Cytoplasmic-facing; the sequence is DIDKWRSVSDTPGTSIAVS. The chain crosses the membrane as a helical span at residues 343–363; that stretch reads SILMGLVMVGRAAFVFPLSFL. Over 364–378 the chain is Vacuolar; sequence SNLAKKNQSEKINFN. An N-linked (GlcNAc...) asparagine glycan is attached at asparagine 370. The chain crosses the membrane as a helical span at residues 379-399; sequence MQVVIWWSGLMRGAVSMALAY. Residues 400 to 413 are Cytoplasmic-facing; the sequence is NKFTRAGHTDVRGN. The chain crosses the membrane as a helical span at residues 414–434; that stretch reads AIMITSTITVCLFSTVVFGML. The Vacuolar segment spans residues 435-538; that stretch reads TKPLISYLLP…ERNPPDLSKA (104 aa). Asparagine 447 carries an N-linked (GlcNAc...) asparagine glycan. The tract at residues 496 to 518 is interaction with CML18/CAM15; that stretch reads RTVHYYWRQFDDSFMRPVFGGRG.

It belongs to the monovalent cation:proton antiporter 1 (CPA1) transporter (TC 2.A.36) family. As to quaternary structure, calcium and pH-dependent interaction with CML18/CAM15 (increases when pH decreases, better at pH 5.5 than at pH 7.5). In terms of tissue distribution, ubiquitous, with higher levels around vascular tissues and guard cells.

Its subcellular location is the vacuole membrane. It localises to the endoplasmic reticulum membrane. It is found in the golgi apparatus membrane. It catalyses the reaction Na(+)(in) + H(+)(out) = Na(+)(out) + H(+)(in). The enzyme catalyses K(+)(in) + H(+)(out) = K(+)(out) + H(+)(in). In terms of biological role, acts in low affinity electroneutral exchange of protons for cations such as Na(+) or K(+) across membranes. Can also exchange Li(+) and Cs(+) with a lower affinity. Involved in vacuolar ion compartmentalization necessary for cell volume regulation and cytoplasmic Na(+) detoxification. Required during leaves expansion, probably to stimulate epidermal cell expansion. Confers competence to grow in high salinity conditions. The protein is Sodium/hydrogen exchanger 1 (NHX1) of Arabidopsis thaliana (Mouse-ear cress).